Consider the following 363-residue polypeptide: Fructose-bisphosphate aldolase (363 aa).

Substrate is bound by residues Arg-56 and Lys-147. Catalysis depends on Glu-188, which acts as the Proton acceptor. Catalysis depends on Lys-230, which acts as the Schiff-base intermediate with dihydroxyacetone-P.

It belongs to the class I fructose-bisphosphate aldolase family.

It carries out the reaction beta-D-fructose 1,6-bisphosphate = D-glyceraldehyde 3-phosphate + dihydroxyacetone phosphate. It participates in carbohydrate degradation; glycolysis; D-glyceraldehyde 3-phosphate and glycerone phosphate from D-glucose: step 4/4. This is Fructose-bisphosphate aldolase (FBPA) from Echinococcus multilocularis (Fox tapeworm).